A 238-amino-acid chain; its full sequence is Triosephosphate isomerase (238 aa).

Position 7–9 (7–9) interacts with substrate; the sequence is NFK. The active-site Electrophile is His-91. Catalysis depends on Glu-158, which acts as the Proton acceptor. Residues Gly-164 and Ser-200 each coordinate substrate.

The protein belongs to the triosephosphate isomerase family. As to quaternary structure, homodimer.

It is found in the cytoplasm. The enzyme catalyses D-glyceraldehyde 3-phosphate = dihydroxyacetone phosphate. It functions in the pathway carbohydrate biosynthesis; gluconeogenesis. It participates in carbohydrate degradation; glycolysis; D-glyceraldehyde 3-phosphate from glycerone phosphate: step 1/1. Involved in the gluconeogenesis. Catalyzes stereospecifically the conversion of dihydroxyacetone phosphate (DHAP) to D-glyceraldehyde-3-phosphate (G3P). This chain is Triosephosphate isomerase, found in Ureaplasma parvum serovar 3 (strain ATCC 27815 / 27 / NCTC 11736).